A 260-amino-acid polypeptide reads, in one-letter code: NAD-capped RNA hydrolase NudC (260 aa).

A substrate-binding site is contributed by Arg74. Positions 103, 106, 121, and 124 each coordinate Zn(2+). Tyr129 contributes to the substrate binding site. Residues Pro130–Thr253 enclose the Nudix hydrolase domain. The a divalent metal cation site is built by Ala163, Glu179, and Glu183. The short motif at Gly164–Gly185 is the Nudix box element. Gln197–Ser204 serves as a coordination point for substrate. Glu224 serves as a coordination point for a divalent metal cation. Ala246 lines the substrate pocket.

The protein belongs to the Nudix hydrolase family. NudC subfamily. Homodimer. The cofactor is Mg(2+). It depends on Mn(2+) as a cofactor. Requires Zn(2+) as cofactor.

The enzyme catalyses a 5'-end NAD(+)-phospho-ribonucleoside in mRNA + H2O = a 5'-end phospho-adenosine-phospho-ribonucleoside in mRNA + beta-nicotinamide D-ribonucleotide + 2 H(+). It carries out the reaction NAD(+) + H2O = beta-nicotinamide D-ribonucleotide + AMP + 2 H(+). The catalysed reaction is NADH + H2O = reduced beta-nicotinamide D-ribonucleotide + AMP + 2 H(+). In terms of biological role, mRNA decapping enzyme that specifically removes the nicotinamide adenine dinucleotide (NAD) cap from a subset of mRNAs by hydrolyzing the diphosphate linkage to produce nicotinamide mononucleotide (NMN) and 5' monophosphate mRNA. The NAD-cap is present at the 5'-end of some mRNAs and stabilizes RNA against 5'-processing. Has preference for mRNAs with a 5'-end purine. Catalyzes the hydrolysis of a broad range of dinucleotide pyrophosphates. The protein is NAD-capped RNA hydrolase NudC of Vibrio parahaemolyticus serotype O3:K6 (strain RIMD 2210633).